A 101-amino-acid chain; its full sequence is Eukaryotic translation initiation factor 4E-binding protein 3 (101 aa).

The interval 1–28 (MSSSTSCPIPGCRDQLPDGYSTTPGGTL) is disordered. Positions 40–46 (YDRKFLL) match the YXXXXLphi motif motif. Residues 97-101 (FEMDM) carry the TOS motif motif.

It belongs to the eIF4E-binding protein family. Interacts with EIF4E. Interacts with RPA2 (via N-terminus); the interaction enhances EIF4EBP3-mediated inhibition of EIF4E-mediated mRNA nuclear export. Phosphorylated.

Its subcellular location is the cytoplasm. It localises to the nucleus. Repressor of translation initiation that regulates EIF4E activity by preventing its assembly into the eIF4F complex: the hypophosphorylated form competes with EIF4G1/EIF4G3 and strongly binds to EIF4E, leading to repression of translation. In contrast, the hyperphosphorylated form dissociates from EIF4E, allowing interaction between EIF4G1/EIF4G3 and EIF4E, leading to initiation of translation. Inhibits EIF4E-mediated mRNA nuclear export. The polypeptide is Eukaryotic translation initiation factor 4E-binding protein 3 (Eif4ebp3) (Mus musculus (Mouse)).